A 408-amino-acid chain; its full sequence is Peptidase T (408 aa).

His-78 lines the Zn(2+) pocket. Asp-80 is a catalytic residue. Asp-141 provides a ligand contact to Zn(2+). Glu-175 (proton acceptor) is an active-site residue. Positions 176, 198, and 380 each coordinate Zn(2+).

The protein belongs to the peptidase M20B family. Requires Zn(2+) as cofactor.

The protein resides in the cytoplasm. It catalyses the reaction Release of the N-terminal residue from a tripeptide.. Functionally, cleaves the N-terminal amino acid of tripeptides. The polypeptide is Peptidase T (Clostridium botulinum (strain Okra / Type B1)).